The chain runs to 1792 residues: Brefeldin A-inhibited guanine nucleotide-exchange protein 2 (1792 aa).

M1 is subject to N-acetylmethionine. Positions Q2–T224 are DCB; DCB:DCB domain and DCB:HUS domain interaction. A disordered region spans residues E207–E294. S214, S218, and S227 each carry phosphoserine. Polar residues predominate over residues S214 to A225. Residues L233–T243 show a composition bias toward polar residues. T244 is modified (phosphothreonine). A phosphoserine mark is found at S355 and S356. Residues A515–N535 are HUS; DCB:HUS domain interaction. Residue S621 is modified to Phosphoserine. T623 carries the post-translational modification Phosphothreonine. S624 bears the Phosphoserine mark. At T633 the chain carries Phosphothreonine. The 132-residue stretch at F661–S792 folds into the SEC7 domain. Phosphoserine occurs at positions 707, 1518, 1520, 1521, 1532, 1535, 1541, and 1789.

As to quaternary structure, homodimer. Interacts with ARFGEF1/BIG1; both proteins are probably part of the same or very similar macromolecular complexes. Interacts with PRKAR1A, PRKAR2A, PRKAR1B, PRKAR2B, PPP1CC, PDE3A, TNFRSF1A, MYCBP and EXOC7. Interacts with GABRB1, GABRB2 and GABRB3. In vitro phosphorylated by PKA reducing its GEF activity and dephosphorylated by phosphatase PP1.

The protein localises to the cytoplasm. It is found in the membrane. Its subcellular location is the golgi apparatus. It localises to the perinuclear region. The protein resides in the trans-Golgi network. The protein localises to the endosome. It is found in the cytoskeleton. Its subcellular location is the microtubule organizing center. It localises to the centrosome. The protein resides in the cell projection. The protein localises to the dendrite. It is found in the cytoplasmic vesicle. Its subcellular location is the synapse. With respect to regulation, inhibited by brefeldin A. Promotes guanine-nucleotide exchange on ARF1 and ARF3 and to a lower extent on ARF5 and ARF6. Promotes the activation of ARF1/ARF5/ARF6 through replacement of GDP with GTP. Involved in the regulation of Golgi vesicular transport. Required for the integrity of the endosomal compartment. Involved in trafficking from the trans-Golgi network (TGN) to endosomes and is required for membrane association of the AP-1 complex and GGA1. Seems to be involved in recycling of the transferrin receptor from recycling endosomes to the plasma membrane. Probably is involved in the exit of GABA(A) receptors from the endoplasmic reticulum. Involved in constitutive release of tumor necrosis factor receptor 1 via exosome-like vesicles; the function seems to involve PKA and specifically PRKAR2B. Proposed to act as A kinase-anchoring protein (AKAP) and may mediate crosstalk between Arf and PKA pathways. This is Brefeldin A-inhibited guanine nucleotide-exchange protein 2 (Arfgef2) from Mus musculus (Mouse).